The following is a 388-amino-acid chain: Phosphopentomutase (388 aa).

Asp-11, Asp-283, His-288, Asp-324, His-325, and His-336 together coordinate Mn(2+).

It belongs to the phosphopentomutase family. Mn(2+) is required as a cofactor.

Its subcellular location is the cytoplasm. The catalysed reaction is 2-deoxy-alpha-D-ribose 1-phosphate = 2-deoxy-D-ribose 5-phosphate. It carries out the reaction alpha-D-ribose 1-phosphate = D-ribose 5-phosphate. It participates in carbohydrate degradation; 2-deoxy-D-ribose 1-phosphate degradation; D-glyceraldehyde 3-phosphate and acetaldehyde from 2-deoxy-alpha-D-ribose 1-phosphate: step 1/2. Isomerase that catalyzes the conversion of deoxy-ribose 1-phosphate (dRib-1-P) and ribose 1-phosphate (Rib-1-P) to deoxy-ribose 5-phosphate (dRib-5-P) and ribose 5-phosphate (Rib-5-P), respectively. The protein is Phosphopentomutase of Enterococcus faecalis (strain ATCC 700802 / V583).